Here is a 347-residue protein sequence, read N- to C-terminus: Geranylgeranyl pyrophosphate synthase 7, chloroplastic (347 aa).

The N-terminal 39 residues, 1–39 (MTTLNLSIFPSVKISSSASIPGFIKIQPFLLRRKLSTVL), are a transit peptide targeting the chloroplast. Lys-95, Arg-98, and His-127 together coordinate isopentenyl diphosphate. Positions 134 and 140 each coordinate Mg(2+). Arg-145 contacts dimethylallyl diphosphate. Arg-146 provides a ligand contact to isopentenyl diphosphate. Dimethylallyl diphosphate is bound by residues Lys-232, Thr-233, Gln-270, Lys-287, and Lys-297.

This sequence belongs to the FPP/GGPP synthase family. In terms of assembly, monomer. Mg(2+) is required as a cofactor.

The protein resides in the plastid. It localises to the chloroplast. The catalysed reaction is isopentenyl diphosphate + dimethylallyl diphosphate = (2E)-geranyl diphosphate + diphosphate. The enzyme catalyses isopentenyl diphosphate + (2E)-geranyl diphosphate = (2E,6E)-farnesyl diphosphate + diphosphate. It catalyses the reaction isopentenyl diphosphate + (2E,6E)-farnesyl diphosphate = (2E,6E,10E)-geranylgeranyl diphosphate + diphosphate. It participates in isoprenoid biosynthesis; farnesyl diphosphate biosynthesis; farnesyl diphosphate from geranyl diphosphate and isopentenyl diphosphate: step 1/1. Its pathway is isoprenoid biosynthesis; geranyl diphosphate biosynthesis; geranyl diphosphate from dimethylallyl diphosphate and isopentenyl diphosphate: step 1/1. The protein operates within isoprenoid biosynthesis; geranylgeranyl diphosphate biosynthesis; geranylgeranyl diphosphate from farnesyl diphosphate and isopentenyl diphosphate: step 1/1. Catalyzes the trans-addition of the three molecules of IPP onto DMAPP to form geranylgeranyl pyrophosphate. The sequence is that of Geranylgeranyl pyrophosphate synthase 7, chloroplastic from Arabidopsis thaliana (Mouse-ear cress).